We begin with the raw amino-acid sequence, 521 residues long: Bifunctional purine biosynthesis protein PurH (521 aa).

The 150-residue stretch at 1–150 (MSEDRKAIKR…KNHPSVAVVT (150 aa)) folds into the MGS-like domain.

The protein belongs to the PurH family.

The catalysed reaction is (6R)-10-formyltetrahydrofolate + 5-amino-1-(5-phospho-beta-D-ribosyl)imidazole-4-carboxamide = 5-formamido-1-(5-phospho-D-ribosyl)imidazole-4-carboxamide + (6S)-5,6,7,8-tetrahydrofolate. It catalyses the reaction IMP + H2O = 5-formamido-1-(5-phospho-D-ribosyl)imidazole-4-carboxamide. It participates in purine metabolism; IMP biosynthesis via de novo pathway; 5-formamido-1-(5-phospho-D-ribosyl)imidazole-4-carboxamide from 5-amino-1-(5-phospho-D-ribosyl)imidazole-4-carboxamide (10-formyl THF route): step 1/1. Its pathway is purine metabolism; IMP biosynthesis via de novo pathway; IMP from 5-formamido-1-(5-phospho-D-ribosyl)imidazole-4-carboxamide: step 1/1. The protein is Bifunctional purine biosynthesis protein PurH of Corynebacterium efficiens (strain DSM 44549 / YS-314 / AJ 12310 / JCM 11189 / NBRC 100395).